A 169-amino-acid polypeptide reads, in one-letter code: GTP-dependent dephospho-CoA kinase (169 aa).

Asp-45, Asp-64, and Glu-121 together coordinate GTP.

Belongs to the GTP-dependent DPCK family.

The enzyme catalyses 3'-dephospho-CoA + GTP = GDP + CoA + H(+). The protein operates within cofactor biosynthesis; coenzyme A biosynthesis. Its function is as follows. Catalyzes the GTP-dependent phosphorylation of the 3'-hydroxyl group of dephosphocoenzyme A to form coenzyme A (CoA). The sequence is that of GTP-dependent dephospho-CoA kinase from Methanobrevibacter smithii (strain ATCC 35061 / DSM 861 / OCM 144 / PS).